Reading from the N-terminus, the 1062-residue chain is Isoleucine--tRNA ligase (1062 aa).

Residues 47-57 (PYTTGHIHLGT) carry the 'HIGH' region motif. Residues 591 to 595 (KMSKS) carry the 'KMSKS' region motif. K594 provides a ligand contact to ATP.

Belongs to the class-I aminoacyl-tRNA synthetase family. IleS type 2 subfamily. As to quaternary structure, monomer. Zn(2+) is required as a cofactor.

The protein resides in the cytoplasm. The enzyme catalyses tRNA(Ile) + L-isoleucine + ATP = L-isoleucyl-tRNA(Ile) + AMP + diphosphate. Functionally, catalyzes the attachment of isoleucine to tRNA(Ile). As IleRS can inadvertently accommodate and process structurally similar amino acids such as valine, to avoid such errors it has two additional distinct tRNA(Ile)-dependent editing activities. One activity is designated as 'pretransfer' editing and involves the hydrolysis of activated Val-AMP. The other activity is designated 'posttransfer' editing and involves deacylation of mischarged Val-tRNA(Ile). This chain is Isoleucine--tRNA ligase, found in Methanospirillum hungatei JF-1 (strain ATCC 27890 / DSM 864 / NBRC 100397 / JF-1).